Reading from the N-terminus, the 994-residue chain is Phosphoenolpyruvate carboxylase (994 aa).

The segment at 1–67 (MKAVRSDKTT…GRTREDKDHP (67 aa)) is disordered. Low complexity-rich tracts occupy residues 9 to 24 (TTQA…PAKA) and 34 to 57 (AAPQ…PKAN). Residues H204 and K646 contribute to the active site.

This sequence belongs to the PEPCase type 1 family. Requires Mg(2+) as cofactor.

It carries out the reaction oxaloacetate + phosphate = phosphoenolpyruvate + hydrogencarbonate. Forms oxaloacetate, a four-carbon dicarboxylic acid source for the tricarboxylic acid cycle. This is Phosphoenolpyruvate carboxylase from Paraburkholderia xenovorans (strain LB400).